Here is a 449-residue protein sequence, read N- to C-terminus: UDP-N-acetylmuramate--L-alanine ligase (449 aa).

G121 to S127 provides a ligand contact to ATP.

Belongs to the MurCDEF family.

The protein localises to the cytoplasm. The catalysed reaction is UDP-N-acetyl-alpha-D-muramate + L-alanine + ATP = UDP-N-acetyl-alpha-D-muramoyl-L-alanine + ADP + phosphate + H(+). The protein operates within cell wall biogenesis; peptidoglycan biosynthesis. In terms of biological role, cell wall formation. This is UDP-N-acetylmuramate--L-alanine ligase from Helicobacter pylori (strain HPAG1).